Consider the following 183-residue polypeptide: uncharacterized protein (183 aa).

The protein belongs to the isochorismatase family.

This is an uncharacterized protein from Bacillus subtilis (strain 168).